We begin with the raw amino-acid sequence, 772 residues long: uncharacterized protein (772 aa).

2 helical membrane-spanning segments follow: residues 16–36 and 301–321; these read LITF…LFSY and IGWI…LFSW. The 99-residue stretch at 670 to 768 folds into the HTH araC/xylS-type domain; it reads DNIIHIIHHE…GITPGNYRQQ (99 aa). DNA-binding regions (H-T-H motif) lie at residues 687–708 and 735–758; these read DEIA…KKEM and VKDI…KKLE.

It localises to the cell membrane. This is an uncharacterized protein from Bacillus subtilis (strain 168).